The chain runs to 337 residues: Transcription initiation factor IIB (337 aa).

The TFIIB-type zinc finger occupies 37–68; sequence EKAVCPECGSRNLVHDYERAELVCGDCGLVID. Zn(2+) is bound by residues Cys-41, Cys-44, Cys-60, and Cys-63. Tandem repeats lie at residues 154–237 and 248–329.

The protein belongs to the TFIIB family.

Stabilizes TBP binding to an archaeal box-A promoter. Also responsible for recruiting RNA polymerase II to the pre-initiation complex (DNA-TBP-TFIIB). This chain is Transcription initiation factor IIB, found in Methanosarcina mazei (Methanosarcina frisia).